The following is a 650-amino-acid chain: Acetyl-coenzyme A synthetase (650 aa).

Residues 191–194 (RGGR), Thr-311, and Asn-335 each bind CoA. Residues 387–389 (GEP), 411–416 (DTWWQT), Asp-500, and Arg-515 contribute to the ATP site. Residue Ser-523 coordinates CoA. Arg-526 contributes to the ATP binding site. The Mg(2+) site is built by Val-537, His-539, and Val-542. Arg-584 is a CoA binding site. The residue at position 609 (Lys-609) is an N6-acetyllysine.

The protein belongs to the ATP-dependent AMP-binding enzyme family. Mg(2+) is required as a cofactor. Post-translationally, acetylated. Deacetylation by the SIR2-homolog deacetylase activates the enzyme.

The catalysed reaction is acetate + ATP + CoA = acetyl-CoA + AMP + diphosphate. Its function is as follows. Catalyzes the conversion of acetate into acetyl-CoA (AcCoA), an essential intermediate at the junction of anabolic and catabolic pathways. AcsA undergoes a two-step reaction. In the first half reaction, AcsA combines acetate with ATP to form acetyl-adenylate (AcAMP) intermediate. In the second half reaction, it can then transfer the acetyl group from AcAMP to the sulfhydryl group of CoA, forming the product AcCoA. The chain is Acetyl-coenzyme A synthetase from Shewanella sp. (strain ANA-3).